The sequence spans 488 residues: UDP-N-acetylmuramate--L-alanine ligase (488 aa).

122-128 (GTHGKTT) serves as a coordination point for ATP.

It belongs to the MurCDEF family.

The protein localises to the cytoplasm. It carries out the reaction UDP-N-acetyl-alpha-D-muramate + L-alanine + ATP = UDP-N-acetyl-alpha-D-muramoyl-L-alanine + ADP + phosphate + H(+). It functions in the pathway cell wall biogenesis; peptidoglycan biosynthesis. Cell wall formation. In Mycobacterium marinum (strain ATCC BAA-535 / M), this protein is UDP-N-acetylmuramate--L-alanine ligase.